The sequence spans 395 residues: tRNA (guanine-N(7)-)-methyltransferase (395 aa).

Residues E126, E151, and D178 each coordinate S-adenosyl-L-methionine. K204 and D234 together coordinate substrate.

This sequence belongs to the class I-like SAM-binding methyltransferase superfamily. TrmB family.

The catalysed reaction is guanosine(46) in tRNA + S-adenosyl-L-methionine = N(7)-methylguanosine(46) in tRNA + S-adenosyl-L-homocysteine. It functions in the pathway tRNA modification; N(7)-methylguanine-tRNA biosynthesis. Functionally, catalyzes the formation of N(7)-methylguanine at position 46 (m7G46) in tRNA. This Campylobacter fetus subsp. fetus (strain 82-40) protein is tRNA (guanine-N(7)-)-methyltransferase.